We begin with the raw amino-acid sequence, 175 residues long: Large ribosomal subunit protein uL10 (175 aa).

Belongs to the universal ribosomal protein uL10 family. Part of the ribosomal stalk of the 50S ribosomal subunit. The N-terminus interacts with L11 and the large rRNA to form the base of the stalk. The C-terminus forms an elongated spine to which L12 dimers bind in a sequential fashion forming a multimeric L10(L12)X complex.

Its function is as follows. Forms part of the ribosomal stalk, playing a central role in the interaction of the ribosome with GTP-bound translation factors. In Prochlorococcus marinus subsp. pastoris (strain CCMP1986 / NIES-2087 / MED4), this protein is Large ribosomal subunit protein uL10.